The following is a 93-amino-acid chain: Small ribosomal subunit protein uS19 (93 aa).

It belongs to the universal ribosomal protein uS19 family.

In terms of biological role, protein S19 forms a complex with S13 that binds strongly to the 16S ribosomal RNA. The chain is Small ribosomal subunit protein uS19 from Helicobacter acinonychis (strain Sheeba).